The sequence spans 358 residues: Leukotriene B4 receptor 2 (358 aa).

Residues 1–24 lie on the Extracellular side of the membrane; the sequence is MSVCYRPPGNETLLSWKGSRATGT. The N-linked (GlcNAc...) asparagine glycan is linked to Asn-10. A helical membrane pass occupies residues 25–45; sequence AFLLLAALLGLPGNGFVVWSL. Residues 46-60 are Cytoplasmic-facing; sequence AGWRPTAGRPLAATL. A helical membrane pass occupies residues 61–81; the sequence is VLHLALADGAVLLLTPLFVAF. Residues 82-96 lie on the Extracellular side of the membrane; the sequence is LSRQAWPLGQVGCKA. Residues 97–117 form a helical membrane-spanning segment; that stretch reads VYYVCALSMYASVLLTGLLSL. At 118 to 140 the chain is on the cytoplasmic side; the sequence is QRCLAVTRPFLAPRLRSPALARR. A helical transmembrane segment spans residues 141 to 161; the sequence is LLLGVWLAALVLAVPAAVYRH. The Extracellular segment spans residues 162-185; that stretch reads LWGDRVCQLCHPSAVHAAAHLSLE. Residues 186 to 206 form a helical membrane-spanning segment; that stretch reads TLTAFVLPFGTVLGCYGVTLA. The Cytoplasmic segment spans residues 207-225; sequence RLRGARWGSGRQGTRVGRL. The chain crosses the membrane as a helical span at residues 226 to 246; the sequence is VSAIVLAFGLLWAPYHAVNLL. At 247–275 the chain is on the extracellular side; it reads QAVAALAPPEGPLARLGGAGQAARAGTTA. A helical membrane pass occupies residues 276 to 296; the sequence is LAFFSSSVNPVLYVFTAGDLL. The Cytoplasmic segment spans residues 297–358; sequence PRAGPRFLTR…GRMEKDSQEW (62 aa). A disordered region spans residues 315–358; it reads RVGSRSREGTMELRTTPRLKVVGQGRGYGDPGGGGRMEKDSQEW. Positions 338–349 are enriched in gly residues; sequence QGRGYGDPGGGG.

This sequence belongs to the G-protein coupled receptor 1 family.

The protein resides in the cell membrane. Its function is as follows. Low-affinity receptor for leukotrienes including leukotriene B4. Mediates chemotaxis of granulocytes and macrophages. The response is mediated via G-proteins that activate a phosphatidylinositol-calcium second messenger system. The chain is Leukotriene B4 receptor 2 (Ltb4r2) from Rattus norvegicus (Rat).